A 605-amino-acid chain; its full sequence is Aspartate--tRNA(Asp/Asn) ligase (605 aa).

L-aspartate is bound at residue glutamate 178. Residues glutamine 202–lysine 205 form an aspartate region. Arginine 224 serves as a coordination point for L-aspartate. ATP is bound by residues arginine 224–glutamate 226 and glutamine 233. L-aspartate is bound at residue histidine 458. Glutamate 488 is an ATP binding site. Arginine 495 contacts L-aspartate. Glycine 540–arginine 543 contributes to the ATP binding site. Residues glutamine 580–aspartate 605 are disordered.

This sequence belongs to the class-II aminoacyl-tRNA synthetase family. Type 1 subfamily. Homodimer.

The protein localises to the cytoplasm. The enzyme catalyses tRNA(Asx) + L-aspartate + ATP = L-aspartyl-tRNA(Asx) + AMP + diphosphate. Functionally, aspartyl-tRNA synthetase with relaxed tRNA specificity since it is able to aspartylate not only its cognate tRNA(Asp) but also tRNA(Asn). Reaction proceeds in two steps: L-aspartate is first activated by ATP to form Asp-AMP and then transferred to the acceptor end of tRNA(Asp/Asn). The polypeptide is Aspartate--tRNA(Asp/Asn) ligase (Thermosynechococcus vestitus (strain NIES-2133 / IAM M-273 / BP-1)).